Reading from the N-terminus, the 331-residue chain is GTP 3',8-cyclase (331 aa).

One can recognise a Radical SAM core domain in the interval 9 to 233; it reads SFGRQVTYVR…TATNEHTGGP (225 aa). R18 provides a ligand contact to GTP. [4Fe-4S] cluster-binding residues include C25 and C29. Y31 serves as a coordination point for S-adenosyl-L-methionine. Residue C32 coordinates [4Fe-4S] cluster. R67 contacts GTP. G71 is an S-adenosyl-L-methionine binding site. Residue T98 coordinates GTP. S122 serves as a coordination point for S-adenosyl-L-methionine. K159 is a GTP binding site. M193 is a binding site for S-adenosyl-L-methionine. 2 residues coordinate [4Fe-4S] cluster: C257 and C260. 262–264 contacts GTP; the sequence is RVR. A [4Fe-4S] cluster-binding site is contributed by C274.

Belongs to the radical SAM superfamily. MoaA family. Monomer and homodimer. [4Fe-4S] cluster serves as cofactor.

It catalyses the reaction GTP + AH2 + S-adenosyl-L-methionine = (8S)-3',8-cyclo-7,8-dihydroguanosine 5'-triphosphate + 5'-deoxyadenosine + L-methionine + A + H(+). It functions in the pathway cofactor biosynthesis; molybdopterin biosynthesis. In terms of biological role, catalyzes the cyclization of GTP to (8S)-3',8-cyclo-7,8-dihydroguanosine 5'-triphosphate. This chain is GTP 3',8-cyclase, found in Saccharophagus degradans (strain 2-40 / ATCC 43961 / DSM 17024).